Reading from the N-terminus, the 239-residue chain is Serine protease SplF (239 aa).

Positions 1–36 (MNKNIIIKSIAALTILTSITGVGTTMVEGIQQTAKA) are cleaved as a signal peptide. Active-site charge relay system residues include H75, D114, and S192.

It belongs to the peptidase S1B family.

The protein resides in the secreted. This chain is Serine protease SplF (splF), found in Staphylococcus aureus (strain NCTC 8325 / PS 47).